The following is a 245-amino-acid chain: Adapter protein MecA (245 aa).

It belongs to the MecA family. Homodimer.

Enables the recognition and targeting of unfolded and aggregated proteins to the ClpC protease or to other proteins involved in proteolysis. In Streptococcus pneumoniae (strain ATCC BAA-255 / R6), this protein is Adapter protein MecA.